A 432-amino-acid chain; its full sequence is Putative D-alanyl-D-alanine carboxypeptidase (432 aa).

Residues alanine 7–leucine 25 traverse the membrane as a helical; Signal-anchor segment.

This sequence belongs to the peptidase S12 family. YfeW subfamily.

Its subcellular location is the cell inner membrane. The catalysed reaction is Preferential cleavage: (Ac)2-L-Lys-D-Ala-|-D-Ala. Also transpeptidation of peptidyl-alanyl moieties that are N-acyl substituents of D-alanine.. The chain is Putative D-alanyl-D-alanine carboxypeptidase from Salmonella typhi.